The chain runs to 91 residues: Transcriptional repressor FrmR (91 aa).

The protein belongs to the FrmR/RcnR family. Homotetramer.

Its subcellular location is the cytoplasm. Formaldehyde sensor. In the absence of formaldehyde, mediates repression of the frmRAB operon. Acts by binding directly to the frmRAB promoter region. In the presence of formaldehyde, it dissociates from the frmRAB promoter region and allows expression of the formaldehyde detoxification system encoded by frmA and frmB. In Escherichia coli (strain UTI89 / UPEC), this protein is Transcriptional repressor FrmR.